We begin with the raw amino-acid sequence, 528 residues long: Dihydromonacolin L monooxygenase LovA (528 aa).

Over 1 to 23 (MTVDALTQPHHLLSLAWNDTQQH) the chain is Cytoplasmic. Residues 24–44 (GSWFAPLVTTSAGLLCLLLYL) form a helical; Signal-anchor for type II membrane protein membrane-spanning segment. The Lumenal segment spans residues 45–528 (CSSGRRSELP…DEDIRLPGSL (484 aa)). The N-linked (GlcNAc...) asparagine glycan is linked to Asn-399. Cys-465 contacts heme.

This sequence belongs to the cytochrome P450 family. Heme is required as a cofactor.

It is found in the membrane. Its subcellular location is the endoplasmic reticulum membrane. It catalyses the reaction dihydromonacolin L carboxylate + reduced [NADPH--hemoprotein reductase] + O2 = monacolin L carboxylate + oxidized [NADPH--hemoprotein reductase] + 2 H2O + H(+). The enzyme catalyses monacolin L carboxylate + reduced [NADPH--hemoprotein reductase] + O2 = monacolin J carboxylate + oxidized [NADPH--hemoprotein reductase] + H2O + H(+). It participates in polyketide biosynthesis; lovastatin biosynthesis. Its function is as follows. Dihydromonacolin L monooxygenase; part of the gene cluster that mediates the biosynthesis of lovastatin (also known as mevinolin, mevacor or monacolin K), a hypolipidemic inhibitor of (3S)-hydroxymethylglutaryl-coenzyme A (HMG-CoA) reductase (HMGR). The first step in the biosynthesis of lovastatin is the production of dihydromonacolin L acid by the lovastatin nonaketide synthase lovB and the trans-acting enoyl reductase lovC via condensation of one acetyl-CoA unit and 8 malonyl-CoA units. Dihydromonacolin L acid is released from lovB by the thioesterase lovG. Next, dihydromonacolin L acid is oxidized by the dihydromonacolin L monooxygenase lovA twice to form monacolin J acid. The 2-methylbutyrate moiety of lovastatin is synthesized by the lovastatin diketide synthase lovF via condensation of one acetyl-CoA unit and one malonyl-CoA unit. Finally, the covalent attachment of this moiety to monacolin J acid is catalyzed by the transesterase lovD to yield lovastatin. LovD has broad substrate specificity and can also convert monacolin J to simvastatin using alpha-dimethylbutanoyl-S-methyl-3-mercaptopropionate (DMB-S-MMP) as the thioester acyl donor, and can also catalyze the reverse reaction and function as hydrolase in vitro. LovD has much higher activity with LovF-bound 2-methylbutanoate than with free diketide substrates. In Aspergillus terreus (strain NIH 2624 / FGSC A1156), this protein is Dihydromonacolin L monooxygenase LovA.